Reading from the N-terminus, the 439-residue chain is Trigger factor (439 aa).

The 86-residue stretch at 175–260 (SDKLVIDYQN…VKSVYVMKGM (86 aa)) folds into the PPIase FKBP-type domain.

This sequence belongs to the FKBP-type PPIase family. Tig subfamily.

The protein localises to the cytoplasm. The catalysed reaction is [protein]-peptidylproline (omega=180) = [protein]-peptidylproline (omega=0). In terms of biological role, involved in protein export. Acts as a chaperone by maintaining the newly synthesized protein in an open conformation. Functions as a peptidyl-prolyl cis-trans isomerase. In Ehrlichia chaffeensis (strain ATCC CRL-10679 / Arkansas), this protein is Trigger factor.